The chain runs to 192 residues: Probable nicotinate-nucleotide adenylyltransferase (192 aa).

Belongs to the NadD family.

The catalysed reaction is nicotinate beta-D-ribonucleotide + ATP + H(+) = deamido-NAD(+) + diphosphate. The protein operates within cofactor biosynthesis; NAD(+) biosynthesis; deamido-NAD(+) from nicotinate D-ribonucleotide: step 1/1. Catalyzes the reversible adenylation of nicotinate mononucleotide (NaMN) to nicotinic acid adenine dinucleotide (NaAD). The protein is Probable nicotinate-nucleotide adenylyltransferase of Cytophaga hutchinsonii (strain ATCC 33406 / DSM 1761 / CIP 103989 / NBRC 15051 / NCIMB 9469 / D465).